Consider the following 143-residue polypeptide: Cofilin (143 aa).

The ADF-H domain occupies 5 to 137; it reads GVAVADESLN…AYESVLEKVS (133 aa).

The protein belongs to the actin-binding proteins ADF family.

It localises to the cytoplasm. The protein localises to the cytoskeleton. The protein resides in the nucleus matrix. Functionally, controls reversibly actin polymerization and depolymerization in a pH-sensitive manner. It has the ability to bind G- and F-actin in a 1:1 ratio of cofilin to actin. Binding to F-actin is regulated by tropomyosin. It is the major component of intranuclear and cytoplasmic actin rods. Required for accumulation of actin at the cell division site via depolymerizing actin at the cell ends. In association with myosin II has a role in the assembly of the contractile ring via severing actin filaments. Involved in the maintenance of the contractile ring once formed. In association with profilin and capping protein, has a role in the mitotic reorganization of the actin cytoskeleton. This Kluyveromyces lactis (strain ATCC 8585 / CBS 2359 / DSM 70799 / NBRC 1267 / NRRL Y-1140 / WM37) (Yeast) protein is Cofilin (COF1).